The sequence spans 933 residues: Phospholipase D2 (933 aa).

2 disordered regions span residues 1–20 (MAATPQSLFPSGDDLDSSQL) and 134–160 (SPAPEGDSREIPSLPRAGPEGSSRRTA). Residues 65 to 195 (VIAQVVGTER…TEFLEVSQLS (131 aa)) form the PX domain. Positions 203–311 (KGLEGVIRKR…WAQEITELAQ (109 aa)) constitute a PH domain. PLD phosphodiesterase domains are found at residues 437–464 (TLWAHHEKLLVVDQVVAFLGGLDLAYGR) and 751–778 (ELIYIHSKMLIADDRTVIIGSANINDRS). The interval 441–788 (HHEKLLVVDQ…LLGKRDSELA (348 aa)) is catalytic.

The protein belongs to the phospholipase D family. Interacts with PIP5K1B. Interacts with EGFR. Phosphorylated by FGR.

It localises to the cell membrane. It carries out the reaction a 1,2-diacyl-sn-glycero-3-phosphocholine + H2O = a 1,2-diacyl-sn-glycero-3-phosphate + choline + H(+). It catalyses the reaction 1,2-dihexadecanoyl-sn-glycero-3-phosphocholine + H2O = 1,2-dihexadecanoyl-sn-glycero-3-phosphate + choline + H(+). Functionally, function as phospholipase selective for phosphatidylcholine. May have a role in signal-induced cytoskeletal regulation and/or endocytosis. In Bos taurus (Bovine), this protein is Phospholipase D2 (PLD2).